The primary structure comprises 158 residues: NADH-quinone oxidoreductase subunit B 1 (158 aa).

Residues cysteine 37, cysteine 38, cysteine 102, and cysteine 132 each contribute to the [4Fe-4S] cluster site.

It belongs to the complex I 20 kDa subunit family. In terms of assembly, NDH-1 is composed of 14 different subunits. Subunits NuoB, C, D, E, F, and G constitute the peripheral sector of the complex. [4Fe-4S] cluster serves as cofactor.

The protein localises to the cell inner membrane. The enzyme catalyses a quinone + NADH + 5 H(+)(in) = a quinol + NAD(+) + 4 H(+)(out). Its function is as follows. NDH-1 shuttles electrons from NADH, via FMN and iron-sulfur (Fe-S) centers, to quinones in the respiratory chain. Couples the redox reaction to proton translocation (for every two electrons transferred, four hydrogen ions are translocated across the cytoplasmic membrane), and thus conserves the redox energy in a proton gradient. This Chromobacterium violaceum (strain ATCC 12472 / DSM 30191 / JCM 1249 / CCUG 213 / NBRC 12614 / NCIMB 9131 / NCTC 9757 / MK) protein is NADH-quinone oxidoreductase subunit B 1.